A 151-amino-acid chain; its full sequence is FIS1-related protein fis-2 (151 aa).

Residues 126 to 146 form a helical membrane-spanning segment; it reads LIGAAIVGGGALALAGLVAIF.

This sequence belongs to the FIS1 family.

It localises to the mitochondrion outer membrane. The protein resides in the peroxisome membrane. The protein localises to the mitochondrion. Its function is as follows. Involved in the fragmentation of the mitochondrial network. Involved in perinuclear clustering of the mitochondrial network. May act, redundantly with fis-1, downstream of mitochondrial fission, before the fission products participate in mitochondrial homeostasis, mitophagy, or apoptosis. Plays a role in apoptosis by promoting mitochondrial elimination and cell-death execution, acting downstream of caspase ced-3, and perhaps independently of dynamin GTPase drp-1, caspase ced-9 and apoptosis-inducing factor AIFM/wah-1. The polypeptide is FIS1-related protein fis-2 (Caenorhabditis elegans).